A 359-amino-acid polypeptide reads, in one-letter code: 3-dehydroquinate synthase (359 aa).

NAD(+) contacts are provided by residues 71–76 (DGEQYK), 105–109 (GVIGD), 129–130 (TT), lysine 142, lysine 151, and 169–172 (CLKT). 3 residues coordinate Zn(2+): glutamate 184, histidine 247, and histidine 264.

The protein belongs to the sugar phosphate cyclases superfamily. Dehydroquinate synthase family. It depends on Co(2+) as a cofactor. Requires Zn(2+) as cofactor. NAD(+) is required as a cofactor.

It localises to the cytoplasm. The enzyme catalyses 7-phospho-2-dehydro-3-deoxy-D-arabino-heptonate = 3-dehydroquinate + phosphate. It participates in metabolic intermediate biosynthesis; chorismate biosynthesis; chorismate from D-erythrose 4-phosphate and phosphoenolpyruvate: step 2/7. Its function is as follows. Catalyzes the conversion of 3-deoxy-D-arabino-heptulosonate 7-phosphate (DAHP) to dehydroquinate (DHQ). The sequence is that of 3-dehydroquinate synthase from Shewanella amazonensis (strain ATCC BAA-1098 / SB2B).